Reading from the N-terminus, the 159-residue chain is MGDYYVSDAPSTVNLADQINQHLSPVQSVQPVQPIQTQYNPNVLTSQQLAQIQNNPMYHYNDSRFTFDFQEILKRAIKYLIEGLAVAFVAYYFIGKGKLNIKDIVMLGITAACVFAILDVFSPTVALGARFGAGFGIGTSLFGLNPAVIGGPSLVAPIL.

A run of 3 helical transmembrane segments spans residues 76–96 (AIKYLIEGLAVAFVAYYFIGK), 104–124 (IVMLGITAACVFAILDVFSPT), and 131–151 (FGAGFGIGTSLFGLNPAVIGG).

The protein resides in the membrane. This is an uncharacterized protein from Acanthamoeba polyphaga (Amoeba).